A 757-amino-acid chain; its full sequence is Mitofusin-2 (757 aa).

The Cytoplasmic segment spans residues 1–604 (MSLLFSRCNS…TQEELMVSMV (604 aa)). Residues 30-94 (KHFVTAKKKI…VRGISEVLAR (65 aa)) form a part of a helix bundle domain, formed by helices from N-terminal and C-terminal regions region. The region spanning 93–342 (ARRHMKVAFF…VRMFEFQNFE (250 aa)) is the Dynamin-type G domain. Residues 103 to 110 (GRTSNGKS) form a G1 motif region. 106 to 111 (SNGKST) is a binding site for GTP. Position 111 is a phosphothreonine; by PINK1 (Thr-111). Residues 129-130 (TT) form a G2 motif region. The interval 199–202 (DSPG) is G3 motif. Residue 258 to 261 (NRWD) participates in GTP binding. The tract at residues 258-261 (NRWD) is G4 motif. Position 288 (Glu-288) is a region of interest, G5 motif. GTP contacts are provided by Ser-305 and Lys-307. A part of a helix bundle domain, formed by helices from N-terminal and C-terminal regions region spans residues 359–385 (EQHTVRAKQIAEAVRLIMDSLHIAAQE). A coiled-coil region spans residues 406–434 (KQLELLAQDYKLRIKQITEEVERQVSTAM). Ser-442 is subject to Phosphoserine. Residues 605–625 (TGLASLTSRTSMGILVVGGVV) form a helical membrane-spanning segment. Position 626 (Trp-626) is a topological domain, mitochondrial intermembrane. Residues 627-647 (KAVGWRLIALSFGLYGLLYVY) form a helical membrane-spanning segment. Over 648-757 (ERLTWTTKAK…FTHQYLQPSR (110 aa)) the chain is Cytoplasmic. Positions 696-738 (FAHLCQQVDITRDNLEQEIAAMNKKVEALDSLQSRAKLLRNKA) form a coiled coil. Residues 722–753 (EALDSLQSRAKLLRNKAGWLDSELNMFTHQYL) form a part of a helix bundle domain, formed by helices from N-terminal and C-terminal regions region.

The protein belongs to the TRAFAC class dynamin-like GTPase superfamily. Dynamin/Fzo/YdjA family. Mitofusin subfamily. As to quaternary structure, forms homomultimers and heteromultimers with MFN1. Oligomerization is essential for mitochondrion fusion. Interacts with VAT1. Interacts with STOML2; may form heterooligomers. Interacts (phosphorylated) with PRKN. Interacts with EIF2AK3. Interacts with THG1L; THG1L probably functions as a guanyl-nucleotide exchange factor/GEF, activating MFN2. Phosphorylated by PINK1. Post-translationally, ubiquitinated by non-degradative ubiquitin by PRKN, promoting mitochondrial fusion; deubiquitination by USP30 inhibits mitochondrial fusion. Ubiquitinated by HUWE1 when dietary stearate (C18:0) levels are low; ubiquitination inhibits mitochondrial fusion. As to expression, ubiquitous. Expression is markedly reduced in ApoE-knockout mouse atherosclerotic arteries.

The protein resides in the mitochondrion outer membrane. It catalyses the reaction GTP + H2O = GDP + phosphate + H(+). Its function is as follows. Mitochondrial outer membrane GTPase that mediates mitochondrial clustering and fusion. Mitochondria are highly dynamic organelles, and their morphology is determined by the equilibrium between mitochondrial fusion and fission events. Overexpression induces the formation of mitochondrial networks. Membrane clustering requires GTPase activity and may involve a major rearrangement of the coiled coil domains. Plays a central role in mitochondrial metabolism and may be associated with obesity and/or apoptosis processes. Plays an important role in the regulation of vascular smooth muscle cell proliferation. Involved in the clearance of damaged mitochondria via selective autophagy (mitophagy). Is required for PRKN recruitment to dysfunctional mitochondria. Involved in the control of unfolded protein response (UPR) upon ER stress including activation of apoptosis and autophagy during ER stress. Acts as an upstream regulator of EIF2AK3 and suppresses EIF2AK3 activation under basal conditions. This chain is Mitofusin-2 (Mfn2), found in Mus musculus (Mouse).